Reading from the N-terminus, the 871-residue chain is Speckle targeted PIP5K1A-regulated poly(A) polymerase (871 aa).

The segment at F16–L46 adopts a Matrin-type zinc-finger fold. The RRM domain occupies R56–Q128. Position 205 (S205) interacts with ATP. Residues D216 and D218 each coordinate Mg(2+). UTP-binding residues include D216 and D218. Residues Q252–G321 are disordered. Over residues A259–S269 the composition is skewed to pro residues. N392 contacts ATP. UTP is bound by residues N392, R414, Y432, and H547. The 59-residue stretch at L489 to H547 folds into the PAP-associated domain. The KA1; binds the bulging loops of U6 snRNA but is dispensable for terminal uridylyltransferase activity stretch occupies residues S596 to K871. A disordered region spans residues G636–E684. Residues A659–E669 show a composition bias toward basic and acidic residues. A Phosphoserine modification is found at S748.

Belongs to the DNA polymerase type-B-like family. As to quaternary structure, associates with the cleavage and polyadenylation specificity factor (CPSF) complex. Interacts with CPSF1 and CPSF3; the interaction is direct. Interacts with PIP5K1A. It depends on Mg(2+) as a cofactor. Mn(2+) is required as a cofactor. In terms of processing, phosphorylated by CK1 in the proline-rich (Pro-rich) region.

It localises to the nucleus. The protein resides in the nucleolus. It is found in the nucleus speckle. The enzyme catalyses RNA(n) + UTP = RNA(n)-3'-uridine ribonucleotide + diphosphate. It catalyses the reaction RNA(n) + ATP = RNA(n)-3'-adenine ribonucleotide + diphosphate. Its activity is regulated as follows. Adenylyltransferase activity is specifically phosphatidylinositol 4,5-bisphosphate (PtdIns(4,5)P2). Poly(A) polymerase that creates the 3'-poly(A) tail of specific pre-mRNAs. Localizes to nuclear speckles together with PIP5K1A and mediates polyadenylation of a select set of mRNAs, such as HMOX1. In addition to polyadenylation, it is also required for the 3'-end cleavage of pre-mRNAs: binds to the 3'UTR of targeted pre-mRNAs and promotes the recruitment and assembly of the CPSF complex on the 3'UTR of pre-mRNAs. In addition to adenylyltransferase activity, also has uridylyltransferase activity. However, the ATP ratio is higher than UTP in cells, suggesting that it functions primarily as a poly(A) polymerase. Acts as a specific terminal uridylyltransferase for U6 snRNA in vitro: responsible for a controlled elongation reaction that results in the restoration of the four 3'-terminal UMP-residues found in newly transcribed U6 snRNA. Not involved in replication-dependent histone mRNA degradation. The protein is Speckle targeted PIP5K1A-regulated poly(A) polymerase (TUT1) of Bos taurus (Bovine).